A 159-amino-acid chain; its full sequence is Phosphopantetheine adenylyltransferase (159 aa).

A substrate-binding site is contributed by Thr10. Residues 10–11 (TF) and His18 each bind ATP. Residues Lys42, Met74, and Arg88 each contribute to the substrate site. Residues 89–91 (GLR), Glu99, and 124–130 (WSFISSS) each bind ATP.

It belongs to the bacterial CoaD family. In terms of assembly, homohexamer. Mg(2+) is required as a cofactor.

It localises to the cytoplasm. It catalyses the reaction (R)-4'-phosphopantetheine + ATP + H(+) = 3'-dephospho-CoA + diphosphate. It participates in cofactor biosynthesis; coenzyme A biosynthesis; CoA from (R)-pantothenate: step 4/5. In terms of biological role, reversibly transfers an adenylyl group from ATP to 4'-phosphopantetheine, yielding dephospho-CoA (dPCoA) and pyrophosphate. The polypeptide is Phosphopantetheine adenylyltransferase (Salmonella choleraesuis (strain SC-B67)).